The following is a 139-amino-acid chain: D-ribose pyranase (139 aa).

The active-site Proton donor is His20. Substrate is bound by residues Asp28, His106, and 128-130; that span reads YAN.

Belongs to the RbsD / FucU family. RbsD subfamily. In terms of assembly, homodecamer.

Its subcellular location is the cytoplasm. The enzyme catalyses beta-D-ribopyranose = beta-D-ribofuranose. It participates in carbohydrate metabolism; D-ribose degradation; D-ribose 5-phosphate from beta-D-ribopyranose: step 1/2. In terms of biological role, catalyzes the interconversion of beta-pyran and beta-furan forms of D-ribose. This chain is D-ribose pyranase, found in Escherichia coli O6:H1 (strain CFT073 / ATCC 700928 / UPEC).